Consider the following 371-residue polypeptide: Tetraacyldisaccharide 4'-kinase (371 aa).

63–70 (AVGGAGKT) serves as a coordination point for ATP.

The protein belongs to the LpxK family.

It carries out the reaction a lipid A disaccharide + ATP = a lipid IVA + ADP + H(+). It participates in glycolipid biosynthesis; lipid IV(A) biosynthesis; lipid IV(A) from (3R)-3-hydroxytetradecanoyl-[acyl-carrier-protein] and UDP-N-acetyl-alpha-D-glucosamine: step 6/6. Functionally, transfers the gamma-phosphate of ATP to the 4'-position of a tetraacyldisaccharide 1-phosphate intermediate (termed DS-1-P) to form tetraacyldisaccharide 1,4'-bis-phosphate (lipid IVA). In Anaeromyxobacter sp. (strain Fw109-5), this protein is Tetraacyldisaccharide 4'-kinase.